Here is a 169-residue protein sequence, read N- to C-terminus: S-ribosylhomocysteine lyase (169 aa).

Residues H54, H58, and C128 each coordinate Fe cation.

This sequence belongs to the LuxS family. As to quaternary structure, homodimer. The cofactor is Fe cation.

It carries out the reaction S-(5-deoxy-D-ribos-5-yl)-L-homocysteine = (S)-4,5-dihydroxypentane-2,3-dione + L-homocysteine. Its function is as follows. Involved in the synthesis of autoinducer 2 (AI-2) which is secreted by bacteria and is used to communicate both the cell density and the metabolic potential of the environment. The regulation of gene expression in response to changes in cell density is called quorum sensing. Catalyzes the transformation of S-ribosylhomocysteine (RHC) to homocysteine (HC) and 4,5-dihydroxy-2,3-pentadione (DPD). This is S-ribosylhomocysteine lyase from Shewanella amazonensis (strain ATCC BAA-1098 / SB2B).